Consider the following 209-residue polypeptide: Large ribosomal subunit protein uL4 (209 aa).

A disordered region spans residues 50 to 78 (STLKKGEVSGGGKKPYQQKHTGRARQGSI).

The protein belongs to the universal ribosomal protein uL4 family. In terms of assembly, part of the 50S ribosomal subunit.

In terms of biological role, one of the primary rRNA binding proteins, this protein initially binds near the 5'-end of the 23S rRNA. It is important during the early stages of 50S assembly. It makes multiple contacts with different domains of the 23S rRNA in the assembled 50S subunit and ribosome. Functionally, forms part of the polypeptide exit tunnel. In Mycoplasmoides gallisepticum (strain R(low / passage 15 / clone 2)) (Mycoplasma gallisepticum), this protein is Large ribosomal subunit protein uL4.